The following is a 439-amino-acid chain: Elongation factor Tu, mitochondrial (439 aa).

The tr-type G domain occupies lysine 51 to glutamate 246. Residues glycine 60–threonine 67 form a G1 region. A GTP-binding site is contributed by glycine 60 to threonine 67. Residues glycine 101–serine 105 are G2. The interval aspartate 122 to glycine 125 is G3. GTP contacts are provided by residues aspartate 122–histidine 126 and asparagine 177–aspartate 180. A G4 region spans residues asparagine 177–aspartate 180. The interval serine 214–leucine 216 is G5.

This sequence belongs to the TRAFAC class translation factor GTPase superfamily. Classic translation factor GTPase family. EF-Tu/EF-1A subfamily.

It localises to the mitochondrion. In terms of biological role, this protein promotes the GTP-dependent binding of aminoacyl-tRNA to the A-site of ribosomes during protein biosynthesis. In Schizosaccharomyces pombe (strain 972 / ATCC 24843) (Fission yeast), this protein is Elongation factor Tu, mitochondrial (tuf1).